The chain runs to 252 residues: 5'-nucleotidase SurE (252 aa).

4 residues coordinate a divalent metal cation: aspartate 8, aspartate 9, serine 39, and asparagine 95.

The protein belongs to the SurE nucleotidase family. It depends on a divalent metal cation as a cofactor.

The protein localises to the cytoplasm. The catalysed reaction is a ribonucleoside 5'-phosphate + H2O = a ribonucleoside + phosphate. Functionally, nucleotidase that shows phosphatase activity on nucleoside 5'-monophosphates. The protein is 5'-nucleotidase SurE of Clostridium botulinum (strain Okra / Type B1).